Here is a 543-residue protein sequence, read N- to C-terminus: Chaperonin GroEL 2 (543 aa).

ATP-binding positions include 29 to 32, 86 to 90, Gly-413, 479 to 481, and Asp-495; these read TLGP, DGTTT, and NAA.

This sequence belongs to the chaperonin (HSP60) family. Forms a cylinder of 14 subunits composed of two heptameric rings stacked back-to-back. Interacts with the co-chaperonin GroES.

The protein localises to the cytoplasm. The enzyme catalyses ATP + H2O + a folded polypeptide = ADP + phosphate + an unfolded polypeptide.. In terms of biological role, together with its co-chaperonin GroES, plays an essential role in assisting protein folding. The GroEL-GroES system forms a nano-cage that allows encapsulation of the non-native substrate proteins and provides a physical environment optimized to promote and accelerate protein folding. This is Chaperonin GroEL 2 from Synechococcus sp. (strain CC9311).